The sequence spans 313 residues: Glyoxylate/hydroxypyruvate reductase A (313 aa).

The active site involves arginine 228. The Proton donor role is filled by histidine 276.

The protein belongs to the D-isomer specific 2-hydroxyacid dehydrogenase family. GhrA subfamily.

The protein localises to the cytoplasm. The catalysed reaction is glycolate + NADP(+) = glyoxylate + NADPH + H(+). The enzyme catalyses (R)-glycerate + NAD(+) = 3-hydroxypyruvate + NADH + H(+). It catalyses the reaction (R)-glycerate + NADP(+) = 3-hydroxypyruvate + NADPH + H(+). In terms of biological role, catalyzes the NADPH-dependent reduction of glyoxylate and hydroxypyruvate into glycolate and glycerate, respectively. The chain is Glyoxylate/hydroxypyruvate reductase A from Serratia proteamaculans (strain 568).